The primary structure comprises 285 residues: Meiotically up-regulated gene 74 protein (285 aa).

Its subcellular location is the cytoplasm. Functionally, has a role in meiosis. In Schizosaccharomyces pombe (strain 972 / ATCC 24843) (Fission yeast), this protein is Meiotically up-regulated gene 74 protein (mug74).